The sequence spans 263 residues: Killer cell lectin-like receptor 4 (263 aa).

The Cytoplasmic portion of the chain corresponds to 1-44 (MTEQEDTFSAVRFHKSSGLQNEMRLKETRKPEKARLRVCSVPWQ). A helical; Signal-anchor for type II membrane protein transmembrane segment spans residues 45 to 65 (LIVIALGILISLRLVTVAVLM). The Extracellular segment spans residues 66-263 (TNIFQYGQQK…CGKRLDKFPH (198 aa)). Residues N87 and N104 are each glycosylated (N-linked (GlcNAc...) asparagine). Residues 139–258 (GVKVYWFCYG…SFICICGKRL (120 aa)) form the C-type lectin domain. Cystine bridges form between C146/C151, C164/C252, C168/C254, and C233/C246. N-linked (GlcNAc...) asparagine glycans are attached at residues N170 and N222.

Homodimer; disulfide-linked. Interacts with the adapter protein TYROBP/DAP12; the interaction leads to natural killer cell activation.

The protein resides in the cell membrane. Functionally, receptor on natural killer (NK) cells for class I MHC. In Mus musculus (Mouse), this protein is Killer cell lectin-like receptor 4 (Klra4).